Reading from the N-terminus, the 257-residue chain is MGRVIRGQRKGAGSVFKAHVKHRKGAAKLRAVDFAERHGYIKGIVKDIIHDPGRGAPLAKVAFRDPYRFKKRTELFVAAEGIHTGQFVYCGKKAQLNIGNVLPVGTMPEGTIVCCVEEKPGDRGKLARASGNYATVISHNPETKKTRVKLPSGSKKVISSANRAIVGVVAGGGRIDKPILKAGRAYHKYKAKRNCWPRVRGVAMNPVEHPFGGGNHQHIGKPSTIRRDAPAGRKVGLIAARRTGRLRGTKTVQEKEN.

Residues 207 to 231 (VEHPFGGGNHQHIGKPSTIRRDAPA) are disordered.

This sequence belongs to the universal ribosomal protein uL2 family. As to quaternary structure, component of the large ribosomal subunit.

It is found in the cytoplasm. Component of the large ribosomal subunit. The ribosome is a large ribonucleoprotein complex responsible for the synthesis of proteins in the cell. This is Large ribosomal subunit protein uL2 (rpl8) from Xenopus tropicalis (Western clawed frog).